The sequence spans 431 residues: Glutamate-1-semialdehyde 2,1-aminomutase 1 (431 aa).

An N6-(pyridoxal phosphate)lysine modification is found at K268.

It belongs to the class-III pyridoxal-phosphate-dependent aminotransferase family. HemL subfamily. Homodimer. It depends on pyridoxal 5'-phosphate as a cofactor.

It localises to the cytoplasm. It carries out the reaction (S)-4-amino-5-oxopentanoate = 5-aminolevulinate. Its pathway is porphyrin-containing compound metabolism; protoporphyrin-IX biosynthesis; 5-aminolevulinate from L-glutamyl-tRNA(Glu): step 2/2. In Bacillus pumilus (strain SAFR-032), this protein is Glutamate-1-semialdehyde 2,1-aminomutase 1.